The chain runs to 780 residues: Pumilio domain-containing protein C4G8.03c (780 aa).

Disordered regions lie at residues 1–29, 298–330, and 358–411; these read MVNRDAYNELNLNKKSQETNRKPSPLSSY, LSHFPDHLDPSRIPSPYQPSSLQPLESRKLHSK, and NHHS…GKTV. Basic and acidic residues predominate over residues 298 to 307; that stretch reads LSHFPDHLDP. The segment covering 311–322 has biased composition (low complexity); the sequence is PSPYQPSSLQPL. The segment covering 358–382 has biased composition (polar residues); sequence NHHSSLSMDNDPTNVSTKNRNNQTV. The region spanning 435–778 is the PUM-HD domain; sequence EKSDDLSNLL…HILAKLTSST (344 aa). Pumilio repeat units lie at residues 462–497, 498–533, 534–569, 570–606, 607–642, 643–678, 679–714, 715–752, and 753–780; these read GFLGHLSTICKDQYGCRYLQKLLDENPKVNASLFFP, EIRQSVVQLMIDPFGNYMCQKLFVYASREQKLSMLN, GIGEGIVDICSNLYGTRSMQNIIDKLTSNEQISLLL, KIIIPSLTTLACDNNGTHVLQKCIAKFPPEKLEPLFL, SMEENLITLATNRHGCCILQRCLDRTNGDIQERLVN, SIIKSCLLLVQNAYGNYLVQHVLELNIQPYTERIIE, KFFGNICKLSLQKFSSNAIEQCIRTASPSTREQMLQ, EFLSFPNIEQLLDDCYANYVMQRFLNVADESQKFLILR, and SISHVIPKIQNTRHGRHILAKLTSSTSS.

The protein is Pumilio domain-containing protein C4G8.03c of Schizosaccharomyces pombe (strain 972 / ATCC 24843) (Fission yeast).